Here is a 174-residue protein sequence, read N- to C-terminus: Regulator of G-protein signaling 8 (174 aa).

Residues 46-162 enclose the RGS domain; sequence SFDILLSNKY…IRSKIYQDLL (117 aa).

The protein resides in the cell membrane. It is found in the membrane. The protein localises to the perikaryon. Its subcellular location is the cell projection. It localises to the dendrite. The protein resides in the nucleus. Regulates G protein-coupled receptor signaling cascades, including signaling via muscarinic acetylcholine receptors and dopamine receptors. Inhibits signal transduction by increasing the GTPase activity of G protein alpha subunits, thereby driving them into their inactive GDP-bound form. Modulates the activity of potassium channels that are activated in response to G protein-coupled receptor signaling. The chain is Regulator of G-protein signaling 8 (rgs8) from Danio rerio (Zebrafish).